A 43-amino-acid chain; its full sequence is SPbeta prophage-derived uncharacterized protein YopG (43 aa).

In Bacillus subtilis (strain 168), this protein is SPbeta prophage-derived uncharacterized protein YopG (yopG).